Here is a 339-residue protein sequence, read N- to C-terminus: Ketol-acid reductoisomerase (NADP(+)) (339 aa).

Positions Met1–Thr182 constitute a KARI N-terminal Rossmann domain. Residues Tyr24–Gln27, Arg48, Ser51, Thr53, and Asp83–Gln86 contribute to the NADP(+) site. Residue His108 is part of the active site. Gly134 serves as a coordination point for NADP(+). Residues Thr183–Ile328 form the KARI C-terminal knotted domain. Asp191, Glu195, Glu227, and Glu231 together coordinate Mg(2+). Ser252 contributes to the substrate binding site.

Belongs to the ketol-acid reductoisomerase family. The cofactor is Mg(2+).

It catalyses the reaction (2R)-2,3-dihydroxy-3-methylbutanoate + NADP(+) = (2S)-2-acetolactate + NADPH + H(+). The catalysed reaction is (2R,3R)-2,3-dihydroxy-3-methylpentanoate + NADP(+) = (S)-2-ethyl-2-hydroxy-3-oxobutanoate + NADPH + H(+). It functions in the pathway amino-acid biosynthesis; L-isoleucine biosynthesis; L-isoleucine from 2-oxobutanoate: step 2/4. It participates in amino-acid biosynthesis; L-valine biosynthesis; L-valine from pyruvate: step 2/4. Its function is as follows. Involved in the biosynthesis of branched-chain amino acids (BCAA). Catalyzes an alkyl-migration followed by a ketol-acid reduction of (S)-2-acetolactate (S2AL) to yield (R)-2,3-dihydroxy-isovalerate. In the isomerase reaction, S2AL is rearranged via a Mg-dependent methyl migration to produce 3-hydroxy-3-methyl-2-ketobutyrate (HMKB). In the reductase reaction, this 2-ketoacid undergoes a metal-dependent reduction by NADPH to yield (R)-2,3-dihydroxy-isovalerate. The sequence is that of Ketol-acid reductoisomerase (NADP(+)) from Parvibaculum lavamentivorans (strain DS-1 / DSM 13023 / NCIMB 13966).